The following is a 305-amino-acid chain: Ribosomal RNA small subunit methyltransferase H (305 aa).

S-adenosyl-L-methionine-binding positions include 33 to 35 (GGY), Asp51, Phe78, Asp96, and Gln103.

The protein belongs to the methyltransferase superfamily. RsmH family.

Its subcellular location is the cytoplasm. It catalyses the reaction cytidine(1402) in 16S rRNA + S-adenosyl-L-methionine = N(4)-methylcytidine(1402) in 16S rRNA + S-adenosyl-L-homocysteine + H(+). Its function is as follows. Specifically methylates the N4 position of cytidine in position 1402 (C1402) of 16S rRNA. In Rickettsia bellii (strain RML369-C), this protein is Ribosomal RNA small subunit methyltransferase H.